A 439-amino-acid chain; its full sequence is Enolase 2 (439 aa).

Histidine 160 and glutamate 169 together coordinate substrate. Glutamate 212 serves as the catalytic Proton donor. Mg(2+) is bound by residues aspartate 247, glutamate 296, and aspartate 323. Residues glutamate 296 and aspartate 323 each contribute to the substrate site. Residue lysine 348 is the Proton acceptor of the active site. Residues 375 to 378 (SHRS) and lysine 399 each bind substrate.

The protein belongs to the enolase family. In terms of assembly, homodimer. Mg(2+) serves as cofactor.

It localises to the cytoplasm. It carries out the reaction (2R)-2-phosphoglycerate = phosphoenolpyruvate + H2O. The protein operates within carbohydrate degradation; glycolysis; pyruvate from D-glyceraldehyde 3-phosphate: step 4/5. The chain is Enolase 2 (ENO2) from Debaryomyces hansenii (strain ATCC 36239 / CBS 767 / BCRC 21394 / JCM 1990 / NBRC 0083 / IGC 2968) (Yeast).